We begin with the raw amino-acid sequence, 257 residues long: Meiotically up-regulated gene 14 protein (257 aa).

It localises to the cytoplasm. The protein resides in the nucleus. Has a role in meiosis. This chain is Meiotically up-regulated gene 14 protein (mug14), found in Schizosaccharomyces pombe (strain 972 / ATCC 24843) (Fission yeast).